Consider the following 1534-residue polypeptide: DNA-directed RNA polymerase subunit beta'' (1534 aa).

4 residues coordinate Zn(2+): C220, C296, C303, and C306. 2 stretches are compositionally biased toward basic and acidic residues: residues 644–668 (RTQE…RTRE) and 678–688 (PENKYRTREGE). Disordered regions lie at residues 644 to 698 (RTQE…EDEY) and 719 to 800 (YRTL…KKEG). Acidic residues-rich tracts occupy residues 744–762 (GEYE…SSED) and 770–789 (TLEE…EYGS).

The protein belongs to the RNA polymerase beta' chain family. RpoC2 subfamily. In terms of assembly, in plastids the minimal PEP RNA polymerase catalytic core is composed of four subunits: alpha, beta, beta', and beta''. When a (nuclear-encoded) sigma factor is associated with the core the holoenzyme is formed, which can initiate transcription. The cofactor is Zn(2+).

It is found in the plastid. It localises to the chloroplast. It carries out the reaction RNA(n) + a ribonucleoside 5'-triphosphate = RNA(n+1) + diphosphate. Its function is as follows. DNA-dependent RNA polymerase catalyzes the transcription of DNA into RNA using the four ribonucleoside triphosphates as substrates. The polypeptide is DNA-directed RNA polymerase subunit beta'' (Saccharum hybrid (Sugarcane)).